A 427-amino-acid polypeptide reads, in one-letter code: Adenylosuccinate synthetase (427 aa).

GTP-binding positions include glycine 12–lysine 18 and glycine 40–threonine 42. The Proton acceptor role is filled by aspartate 13. Mg(2+) contacts are provided by aspartate 13 and glycine 40. IMP-binding positions include aspartate 13 to lysine 16, asparagine 38 to histidine 41, threonine 128, arginine 142, glutamine 223, threonine 238, and arginine 302. Catalysis depends on histidine 41, which acts as the Proton donor. Substrate is bound at residue valine 298–arginine 304. Residues arginine 304, lysine 330 to aspartate 332, and glycine 412 to glycine 414 contribute to the GTP site.

It belongs to the adenylosuccinate synthetase family. As to quaternary structure, homodimer. Mg(2+) serves as cofactor.

Its subcellular location is the cytoplasm. It catalyses the reaction IMP + L-aspartate + GTP = N(6)-(1,2-dicarboxyethyl)-AMP + GDP + phosphate + 2 H(+). The protein operates within purine metabolism; AMP biosynthesis via de novo pathway; AMP from IMP: step 1/2. Plays an important role in the de novo pathway of purine nucleotide biosynthesis. Catalyzes the first committed step in the biosynthesis of AMP from IMP. The protein is Adenylosuccinate synthetase of Frankia casuarinae (strain DSM 45818 / CECT 9043 / HFP020203 / CcI3).